Consider the following 218-residue polypeptide: Phosphoglycolate phosphatase (218 aa).

Residue Asp-7 is the Nucleophile of the active site. Positions 7, 9, and 167 each coordinate Mg(2+).

Belongs to the HAD-like hydrolase superfamily. CbbY/CbbZ/Gph/YieH family. Mg(2+) is required as a cofactor.

It carries out the reaction 2-phosphoglycolate + H2O = glycolate + phosphate. The protein operates within organic acid metabolism; glycolate biosynthesis; glycolate from 2-phosphoglycolate: step 1/1. Its function is as follows. Specifically catalyzes the dephosphorylation of 2-phosphoglycolate. Is involved in the dissimilation of the intracellular 2-phosphoglycolate formed during the DNA repair of 3'-phosphoglycolate ends, a major class of DNA lesions induced by oxidative stress. The protein is Phosphoglycolate phosphatase of Cereibacter sphaeroides (strain ATCC 17025 / ATH 2.4.3) (Rhodobacter sphaeroides).